A 20-amino-acid polypeptide reads, in one-letter code: Implantin (20 aa).

This sequence belongs to the EF-1-beta/EF-1-delta family. In terms of processing, phosphorylated. As to expression, uterus and embryo.

The protein localises to the cytoplasm. It localises to the nucleus. Its function is as follows. Binds DNA. The polypeptide is Implantin (Mus musculus (Mouse)).